The sequence spans 263 residues: Hydroxyacylglutathione hydrolase (263 aa).

Residues His-55, His-57, Asp-59, His-60, His-117, Asp-134, and His-172 each coordinate Zn(2+).

This sequence belongs to the metallo-beta-lactamase superfamily. Glyoxalase II family. As to quaternary structure, monomer. Zn(2+) is required as a cofactor.

The catalysed reaction is an S-(2-hydroxyacyl)glutathione + H2O = a 2-hydroxy carboxylate + glutathione + H(+). It participates in secondary metabolite metabolism; methylglyoxal degradation; (R)-lactate from methylglyoxal: step 2/2. Functionally, thiolesterase that catalyzes the hydrolysis of S-D-lactoyl-glutathione to form glutathione and D-lactic acid. This is Hydroxyacylglutathione hydrolase from Shewanella baltica (strain OS185).